The sequence spans 167 residues: Interferon gamma (167 aa).

A signal peptide spans 1 to 23 (MNYTGYLLAFQLCIILGSSSCYC). Gln-24 is modified (pyrrolidone carboxylic acid). N-linked (GlcNAc...) asparagine glycans are attached at residues Asn-39 and Asn-105. Residues 148 to 167 (SNLRKRKRSQSTFHGRRASI) form a disordered region. Residues 149–167 (NLRKRKRSQSTFHGRRASI) are compositionally biased toward basic residues.

This sequence belongs to the type II (or gamma) interferon family. In terms of assembly, homodimer. Interacts with IFNGR1 (via extracellular domain); this interaction promotes IFNGR1 dimerization. Released primarily from activated T lymphocytes.

Its subcellular location is the secreted. Functionally, type II interferon produced by immune cells such as T-cells and NK cells that plays crucial roles in antimicrobial, antiviral, and antitumor responses by activating effector immune cells and enhancing antigen presentation. Primarily signals through the JAK-STAT pathway after interaction with its receptor IFNGR1 to affect gene regulation. Upon IFNG binding, IFNGR1 intracellular domain opens out to allow association of downstream signaling components JAK2, JAK1 and STAT1, leading to STAT1 activation, nuclear translocation and transcription of IFNG-regulated genes. Many of the induced genes are transcription factors such as IRF1 that are able to further drive regulation of a next wave of transcription. Plays a role in class I antigen presentation pathway by inducing a replacement of catalytic proteasome subunits with immunoproteasome subunits. In turn, increases the quantity, quality, and repertoire of peptides for class I MHC loading. Increases the efficiency of peptide generation also by inducing the expression of activator PA28 that associates with the proteasome and alters its proteolytic cleavage preference. Up-regulates as well MHC II complexes on the cell surface by promoting expression of several key molecules such as cathepsins B/CTSB, H/CTSH, and L/CTSL. Participates in the regulation of hematopoietic stem cells during development and under homeostatic conditions by affecting their development, quiescence, and differentiation. The polypeptide is Interferon gamma (IFNG) (Dasypus novemcinctus (Nine-banded armadillo)).